A 42-amino-acid polypeptide reads, in one-letter code: Cytochrome b6-f complex subunit 7 (42 aa).

A helical membrane pass occupies residues 15 to 35 (IVTAAVTCIFMVLFGLSLGFA).

It belongs to the PetM family. As to quaternary structure, the 4 large subunits of the cytochrome b6-f complex are cytochrome b6, subunit IV (17 kDa polypeptide, PetD), cytochrome f and the Rieske protein, while the 4 small subunits are PetG, PetL, PetM and PetN. The complex functions as a dimer.

Its subcellular location is the plastid. The protein localises to the chloroplast thylakoid membrane. Component of the cytochrome b6-f complex, which mediates electron transfer between photosystem II (PSII) and photosystem I (PSI), cyclic electron flow around PSI, and state transitions. This Trieres chinensis (Marine centric diatom) protein is Cytochrome b6-f complex subunit 7.